A 311-amino-acid polypeptide reads, in one-letter code: Ferrochelatase (311 aa).

Fe cation is bound by residues histidine 179 and glutamate 260.

The protein belongs to the ferrochelatase family.

It localises to the cytoplasm. The enzyme catalyses heme b + 2 H(+) = protoporphyrin IX + Fe(2+). Its pathway is porphyrin-containing compound metabolism; protoheme biosynthesis; protoheme from protoporphyrin-IX: step 1/1. Functionally, catalyzes the ferrous insertion into protoporphyrin IX. In Helicobacter hepaticus (strain ATCC 51449 / 3B1), this protein is Ferrochelatase.